A 680-amino-acid chain; its full sequence is MTEDNAQLRRTWNDLAEKVRYHRDRYYNEQPEIPDADFDALFKQLQQLEEDHPELAVPDSPTMVVGAPVAEQSSFDNVEHLERMLSLDNVFDEQELRDWLGRTPAKQYLTELKIDGLSIDLVYRNGQLERAATRGDGRVGEDITANARVIEDIPHQLQGTDEYPVPAVLEIRGEVFITVEDFPEVNAQRIADGGKPFANPRNAAAGSLRQKNIEDVKKRRLRMISHGIGFTEGFSPASQHDAYLALAAWGLPTSPYTEAVTDPEDVVKKVSYWADHRHDALHEMDGLVIKVDDIASQRALGSTSRAPRWAIAYKYPPEEVTTKLLDIQVGVGRTGRVTPFAVMEPVLVAGSTVSMATLHNQSEVKRKGVLIGDTVVIRKAGEVIPEVLGPVVELRDGTEREYIFPTLCPECGTRLAPAKADDVDWRCPNMQSCPGQLSTRLTYLAGRGAFDIEALGEKGAEDLIRTGILLDESGLFDLTEDDLLSSNVYTTNAGKVNASGKKLLDNLQKSKQTDLWRVLVALSIRHVGPTAARALAGRYHSIQALIDAPLEELSETDGVGTIIAQSFKDWFEVDWHKAIVDKWAAAGVTMEEEVGEVAEQTLEGLTIVVTGGLEGFTRDSVKEAIISRGGKASGSVSKKTDYVVVGENAGSKATKAEELGLRILDEAGFVRLLNTGSADE.

Residues 35–39 (DADFD), 86–87 (SL), and Glu-111 each bind NAD(+). Lys-113 (N6-AMP-lysine intermediate) is an active-site residue. Residues Arg-134, Glu-174, Lys-290, and Lys-314 each coordinate NAD(+). Zn(2+)-binding residues include Cys-408, Cys-411, Cys-427, and Cys-433. The BRCT domain occupies 597–680 (VAEQTLEGLT…RLLNTGSADE (84 aa)).

It belongs to the NAD-dependent DNA ligase family. LigA subfamily. The cofactor is Mg(2+). Mn(2+) is required as a cofactor.

The catalysed reaction is NAD(+) + (deoxyribonucleotide)n-3'-hydroxyl + 5'-phospho-(deoxyribonucleotide)m = (deoxyribonucleotide)n+m + AMP + beta-nicotinamide D-nucleotide.. Functionally, DNA ligase that catalyzes the formation of phosphodiester linkages between 5'-phosphoryl and 3'-hydroxyl groups in double-stranded DNA using NAD as a coenzyme and as the energy source for the reaction. It is essential for DNA replication and repair of damaged DNA. The protein is DNA ligase of Corynebacterium glutamicum (strain R).